The primary structure comprises 274 residues: Penicillin-insensitive murein endopeptidase (274 aa).

The first 19 residues, Met-1 to Ala-19, serve as a signal peptide directing secretion. Intrachain disulfides connect Cys-44–Cys-265, Cys-187–Cys-235, and Cys-216–Cys-223. Zn(2+)-binding residues include His-110, His-113, Asp-120, Asp-147, His-150, and His-211. The disordered stretch occupies residues Asp-225 to Leu-274.

The protein belongs to the peptidase M74 family. Dimer. The cofactor is Zn(2+).

The protein localises to the periplasm. In terms of biological role, murein endopeptidase that cleaves the D-alanyl-meso-2,6-diamino-pimelyl amide bond that connects peptidoglycan strands. Likely plays a role in the removal of murein from the sacculus. The chain is Penicillin-insensitive murein endopeptidase from Citrobacter koseri (strain ATCC BAA-895 / CDC 4225-83 / SGSC4696).